A 522-amino-acid chain; its full sequence is Bifunctional purine biosynthesis protein PurH (522 aa).

The region spanning methionine 1 to valine 143 is the MGS-like domain.

The protein belongs to the PurH family.

The enzyme catalyses (6R)-10-formyltetrahydrofolate + 5-amino-1-(5-phospho-beta-D-ribosyl)imidazole-4-carboxamide = 5-formamido-1-(5-phospho-D-ribosyl)imidazole-4-carboxamide + (6S)-5,6,7,8-tetrahydrofolate. It carries out the reaction IMP + H2O = 5-formamido-1-(5-phospho-D-ribosyl)imidazole-4-carboxamide. It functions in the pathway purine metabolism; IMP biosynthesis via de novo pathway; 5-formamido-1-(5-phospho-D-ribosyl)imidazole-4-carboxamide from 5-amino-1-(5-phospho-D-ribosyl)imidazole-4-carboxamide (10-formyl THF route): step 1/1. It participates in purine metabolism; IMP biosynthesis via de novo pathway; IMP from 5-formamido-1-(5-phospho-D-ribosyl)imidazole-4-carboxamide: step 1/1. The protein is Bifunctional purine biosynthesis protein PurH of Sorangium cellulosum (strain So ce56) (Polyangium cellulosum (strain So ce56)).